Consider the following 464-residue polypeptide: D-inositol 3-phosphate glycosyltransferase (464 aa).

Residues 1–20 (MEGAPRRPDRHARSEEERHV) show a composition bias toward basic and acidic residues. Residues 1-44 (MEGAPRRPDRHARSEEERHVSQYASRLGRRSPAAPTRRRMLRKP) form a disordered region. His-53 serves as a coordination point for 1D-myo-inositol 3-phosphate. UDP-N-acetyl-alpha-D-glucosamine contacts are provided by residues 59–60 (QP) and Gly-67. Residues 64-69 (DAGGMN), Lys-122, Tyr-155, Thr-179, and Arg-199 each bind 1D-myo-inositol 3-phosphate. UDP-N-acetyl-alpha-D-glucosamine contacts are provided by Arg-274, Lys-279, and Val-340. Residues Phe-349, Arg-350, and Ala-352 each coordinate Mg(2+). Positions 362 and 370 each coordinate UDP-N-acetyl-alpha-D-glucosamine. Thr-376 serves as a coordination point for Mg(2+).

This sequence belongs to the glycosyltransferase group 1 family. MshA subfamily. In terms of assembly, homodimer.

The enzyme catalyses 1D-myo-inositol 3-phosphate + UDP-N-acetyl-alpha-D-glucosamine = 1D-myo-inositol 2-acetamido-2-deoxy-alpha-D-glucopyranoside 3-phosphate + UDP + H(+). In terms of biological role, catalyzes the transfer of a N-acetyl-glucosamine moiety to 1D-myo-inositol 3-phosphate to produce 1D-myo-inositol 2-acetamido-2-deoxy-glucopyranoside 3-phosphate in the mycothiol biosynthesis pathway. This Streptomyces avermitilis (strain ATCC 31267 / DSM 46492 / JCM 5070 / NBRC 14893 / NCIMB 12804 / NRRL 8165 / MA-4680) protein is D-inositol 3-phosphate glycosyltransferase.